Consider the following 202-residue polypeptide: Elongation factor Ts, chloroplastic (202 aa).

Belongs to the EF-Ts family.

It localises to the plastid. Its subcellular location is the chloroplast. In terms of biological role, associates with the EF-Tu.GDP complex and induces the exchange of GDP to GTP. It remains bound to the aminoacyl-tRNA.EF-Tu.GTP complex up to the GTP hydrolysis stage on the ribosome. The polypeptide is Elongation factor Ts, chloroplastic (tsf) (Phaeodactylum tricornutum (strain CCAP 1055/1)).